Reading from the N-terminus, the 777-residue chain is Phosphoribosylformylglycinamidine synthase subunit PurL (777 aa).

Residue histidine 50 is part of the active site. Tyrosine 53 and lysine 92 together coordinate ATP. A Mg(2+)-binding site is contributed by glutamate 94. Substrate-binding positions include 95–98 (SHNH) and arginine 117. Histidine 96 serves as the catalytic Proton acceptor. Residue aspartate 118 coordinates Mg(2+). Glutamine 241 is a binding site for substrate. Residue aspartate 269 coordinates Mg(2+). 313–315 (ESQ) contacts substrate. Aspartate 516 and glycine 553 together coordinate ATP. Asparagine 554 contributes to the Mg(2+) binding site. Residue serine 556 coordinates substrate.

The protein belongs to the FGAMS family. In terms of assembly, monomer. Part of the FGAM synthase complex composed of 1 PurL, 1 PurQ and 2 PurS subunits.

It is found in the cytoplasm. It catalyses the reaction N(2)-formyl-N(1)-(5-phospho-beta-D-ribosyl)glycinamide + L-glutamine + ATP + H2O = 2-formamido-N(1)-(5-O-phospho-beta-D-ribosyl)acetamidine + L-glutamate + ADP + phosphate + H(+). The protein operates within purine metabolism; IMP biosynthesis via de novo pathway; 5-amino-1-(5-phospho-D-ribosyl)imidazole from N(2)-formyl-N(1)-(5-phospho-D-ribosyl)glycinamide: step 1/2. In terms of biological role, part of the phosphoribosylformylglycinamidine synthase complex involved in the purines biosynthetic pathway. Catalyzes the ATP-dependent conversion of formylglycinamide ribonucleotide (FGAR) and glutamine to yield formylglycinamidine ribonucleotide (FGAM) and glutamate. The FGAM synthase complex is composed of three subunits. PurQ produces an ammonia molecule by converting glutamine to glutamate. PurL transfers the ammonia molecule to FGAR to form FGAM in an ATP-dependent manner. PurS interacts with PurQ and PurL and is thought to assist in the transfer of the ammonia molecule from PurQ to PurL. In Synechococcus elongatus (strain ATCC 33912 / PCC 7942 / FACHB-805) (Anacystis nidulans R2), this protein is Phosphoribosylformylglycinamidine synthase subunit PurL.